We begin with the raw amino-acid sequence, 86 residues long: Photosystem I reaction center subunit PsaK 1 (86 aa).

Residues 1–8 (MLTSTLLA) constitute a propeptide that is removed on maturation. The next 2 membrane-spanning stretches (helical) occupy residues 14 to 34 (LEWSPTVGIIMVIANVIAITF) and 60 to 80 (PALLATTAFGHILGVGLVLGL).

It belongs to the PsaG/PsaK family. In terms of assembly, the cyanobacterial PSI reaction center is composed of one copy each of PsaA,B,C,D,E,F,I,J,K,L,M and X, and forms dimeric and tetrameric complexes.

Its subcellular location is the cellular thylakoid membrane. This is Photosystem I reaction center subunit PsaK 1 (psaK1) from Nostoc sp. (strain PCC 7120 / SAG 25.82 / UTEX 2576).